The sequence spans 192 residues: NF-kappa-B inhibitor-interacting Ras-like protein 1 (192 aa).

Position 11 to 18 (11 to 18 (GLLSVGKT)) interacts with GTP. Positions 35–43 (DCETMEDVY) match the Effector region motif. Residues 58-93 (HLYDTRGLQEGVELPKHYFSFADGFVLVYSVNNLES) form an interactions with NFKBIA and NFKBIB region. Residues 61–65 (DTRGL) and 120–123 (NKID) each bind GTP. Residues 168–192 (LSQPQSKSSFPLPGRKNKGNSNSEN) are disordered.

It belongs to the small GTPase superfamily. Ras family. KappaB-Ras subfamily. In terms of assembly, interacts with both NF-kappa-B inhibitor alpha (NFKBIA) and beta (NFKBIB) in vitro. However, it probably only interacts with NFKBIB in vivo. Forms a complex with NFKBIB and NF-kappa-B heterodimer (p50/NFKB1 and p65/RELA). Also interacts with c-Rel (REL). Widely expressed.

Its subcellular location is the cytoplasm. Its function is as follows. Atypical Ras-like protein that acts as a potent regulator of NF-kappa-B activity by preventing the degradation of NF-kappa-B inhibitor beta (NFKBIB) by most signals, explaining why NFKBIB is more resistant to degradation. May act by blocking phosphorylation of NFKBIB and mediating cytoplasmic retention of p65/RELA NF-kappa-B subunit. It is unclear whether it acts as a GTPase. Both GTP- and GDP-bound forms block phosphorylation of NFKBIB. The sequence is that of NF-kappa-B inhibitor-interacting Ras-like protein 1 (NKIRAS1) from Homo sapiens (Human).